The following is a 524-amino-acid chain: Translation initiation factor eIF2B subunit delta (524 aa).

Residues 1-174 form a disordered region; that stretch reads MAAVAVAVRE…RQQVPTRKDY (174 aa). Position 2 is an N-acetylalanine (alanine 2). Composition is skewed to basic and acidic residues over residues 8–20 and 31–40; these read VREE…KTEL and LTQEEKLQLR. Serine 12 carries the phosphoserine modification. Residues 41–51 are compositionally biased toward basic residues; sequence KEKKQQKKKRK. Threonine 86 carries the post-translational modification Phosphothreonine. Composition is skewed to basic and acidic residues over residues 96-121 and 161-174; these read SKAE…RKGE and RKPD…RKDY. The tract at residues 171-180 is may bind the chemical integrated stress response (ISR) inhibitor ISRIB; the sequence is RKDYGSKVSL.

The protein belongs to the eIF-2B alpha/beta/delta subunits family. Component of the translation initiation factor 2B (eIF2B) complex which is a heterodecamer of two sets of five different subunits: alpha, beta, gamma, delta and epsilon. Subunits alpha, beta and delta comprise a regulatory subcomplex and subunits epsilon and gamma comprise a catalytic subcomplex. Within the complex, the hexameric regulatory complex resides at the center, with the two heterodimeric catalytic subcomplexes bound on opposite sides.

The protein resides in the cytoplasm. The protein localises to the cytosol. Its activity is regulated as follows. Activated by the chemical integrated stress response (ISR) inhibitor ISRIB which stimulates guanine nucleotide exchange factor activity for both phosphorylated and unphosphorylated eIF2. In terms of biological role, acts as a component of the translation initiation factor 2B (eIF2B) complex, which catalyzes the exchange of GDP for GTP on eukaryotic initiation factor 2 (eIF2) gamma subunit. Its guanine nucleotide exchange factor activity is repressed when bound to eIF2 complex phosphorylated on the alpha subunit, thereby limiting the amount of methionyl-initiator methionine tRNA available to the ribosome and consequently global translation is repressed. The polypeptide is Translation initiation factor eIF2B subunit delta (Eif2b4) (Rattus norvegicus (Rat)).